The chain runs to 148 residues: Deoxyuridine 5'-triphosphate nucleotidohydrolase (148 aa).

Substrate-binding positions include 67-69, Asn80, 84-86, and Met94; these read RSG and LID.

This sequence belongs to the dUTPase family. Mg(2+) is required as a cofactor.

It catalyses the reaction dUTP + H2O = dUMP + diphosphate + H(+). The protein operates within pyrimidine metabolism; dUMP biosynthesis; dUMP from dCTP (dUTP route): step 2/2. In terms of biological role, this enzyme is involved in nucleotide metabolism: it produces dUMP, the immediate precursor of thymidine nucleotides and it decreases the intracellular concentration of dUTP so that uracil cannot be incorporated into DNA. This Burkholderia lata (strain ATCC 17760 / DSM 23089 / LMG 22485 / NCIMB 9086 / R18194 / 383) protein is Deoxyuridine 5'-triphosphate nucleotidohydrolase.